Consider the following 437-residue polypeptide: Histidine--tRNA ligase (437 aa).

This sequence belongs to the class-II aminoacyl-tRNA synthetase family. Homodimer.

The protein resides in the cytoplasm. It catalyses the reaction tRNA(His) + L-histidine + ATP = L-histidyl-tRNA(His) + AMP + diphosphate + H(+). In Opitutus terrae (strain DSM 11246 / JCM 15787 / PB90-1), this protein is Histidine--tRNA ligase.